The chain runs to 315 residues: NAD-dependent protein lipoamidase sirtuin-4, mitochondrial (315 aa).

Residues 1 to 29 constitute a mitochondrion transit peptide; the sequence is MRMSFGLTFKRTAKVHWRANFSQQCSLRS. A Deacetylase sirtuin-type domain is found at 38–315; that stretch reads PPLDPEKVKE…GELLPLIDPR (278 aa). NAD(+) is bound by residues 63 to 83 and 144 to 147; these read GAGISTESGIPDYRSEKVGLY and QNVD. Residue His-162 is the Proton acceptor of the active site. Residues Cys-170, Cys-173, Cys-221, and Cys-224 each coordinate Zn(2+). NAD(+) is bound by residues 261-263, 287-289, and Cys-305; these read GSS and NIG.

This sequence belongs to the sirtuin family. Class II subfamily. As to quaternary structure, interacts with GLUD1, IDE and SLC25A5. Interacts with DLAT and PDHX. Interacts with MCCC1 (via the biotin carboxylation domain). Interacts with PCCA and PC. It depends on Zn(2+) as a cofactor.

The protein localises to the mitochondrion matrix. The catalysed reaction is N(6)-[(R)-lipoyl]-L-lysyl-[protein] + NAD(+) + H2O = 2''-O-lipoyl-ADP-D-ribose + nicotinamide + L-lysyl-[protein]. It carries out the reaction N(6)-biotinyl-L-lysyl-[protein] + NAD(+) + H2O = 2''-O-biotinyl-ADP-D-ribose + nicotinamide + L-lysyl-[protein]. The enzyme catalyses N(6)-acetyl-L-lysyl-[protein] + NAD(+) + H2O = 2''-O-acetyl-ADP-D-ribose + nicotinamide + L-lysyl-[protein]. It catalyses the reaction L-cysteinyl-[protein] + NAD(+) = S-(ADP-D-ribosyl)-L-cysteinyl-[protein] + nicotinamide + H(+). Its function is as follows. Acts as a NAD-dependent protein lipoamidase, biotinylase, deacetylase and ADP-ribosyl transferase. Catalyzes more efficiently removal of lipoyl- and biotinyl- than acetyl-lysine modifications. Inhibits the pyruvate dehydrogenase complex (PDH) activity via the enzymatic hydrolysis of the lipoamide cofactor from the E2 component, DLAT, in a phosphorylation-independent manner. Catalyzes the transfer of ADP-ribosyl groups onto target proteins, including mitochondrial GLUD1, inhibiting GLUD1 enzyme activity. Acts as a negative regulator of mitochondrial glutamine metabolism by mediating mono ADP-ribosylation of GLUD1: expressed in response to DNA damage and negatively regulates anaplerosis by inhibiting GLUD1, leading to block metabolism of glutamine into tricarboxylic acid cycle and promoting cell cycle arrest. In response to mTORC1 signal, SIRT4 expression is repressed, promoting anaplerosis and cell proliferation. Acts as a tumor suppressor. Also acts as a NAD-dependent protein deacetylase: mediates deacetylation of 'Lys-471' of MLYCD, inhibiting its activity, thereby acting as a regulator of lipid homeostasis. Does not seem to deacetylate PC. Controls fatty acid oxidation by inhibiting PPARA transcriptional activation. Impairs SIRT1-PPARA interaction probably through the regulation of NAD(+) levels. Down-regulates insulin secretion. In Bos taurus (Bovine), this protein is NAD-dependent protein lipoamidase sirtuin-4, mitochondrial.